The sequence spans 245 residues: Thiopurine S-methyltransferase (245 aa).

Serine 14 carries the post-translational modification Phosphoserine. 29–40 (WQDKWVNGKTAF) is an S-adenosyl-L-methionine binding site. Phenylalanine 40 is a substrate binding site. At lysine 58 the chain carries N6-acetyllysine. S-adenosyl-L-methionine-binding positions include leucine 69, glutamate 90, 134–135 (SI), and arginine 152.

The protein belongs to the class I-like SAM-binding methyltransferase superfamily. TPMT family. As to quaternary structure, monomer.

Its subcellular location is the cytoplasm. It catalyses the reaction S-adenosyl-L-methionine + a thiopurine = S-adenosyl-L-homocysteine + a thiopurine S-methylether.. The catalysed reaction is mercaptopurine + S-adenosyl-L-methionine = 6-methylthiopurine + S-adenosyl-L-homocysteine + H(+). The enzyme catalyses 6-thioguanine + S-adenosyl-L-methionine = 6-methylthioguanine + S-adenosyl-L-homocysteine + H(+). Its activity is regulated as follows. Inhibited by S-adenosyl-L-homocysteine (SAH). Its function is as follows. Catalyzes the S-methylation of thiopurine drugs such as 6-mercaptopurine (also called mercaptopurine, 6-MP or its brand name Purinethol) and 6-thioguanine (also called tioguanine or 6-TG) using S-adenosyl-L-methionine as the methyl donor. TPMT activity modulates the cytotoxic effects of thiopurine prodrugs. A natural substrate for this enzyme has yet to be identified. This is Thiopurine S-methyltransferase (TPMT) from Homo sapiens (Human).